The sequence spans 353 residues: Homeobox protein Mohawk (353 aa).

Over residues 18-27 (RGTPDRERGS) the composition is skewed to basic and acidic residues. The disordered stretch occupies residues 18–50 (RGTPDRERGSRTFSGFLDNPHTGPEVGIPDGPP). A DNA-binding region (homeobox; TALE-type) is located at residues 71–132 (VRHKRQALQD…NARRRLKNTV (62 aa)). 2 disordered regions span residues 157–183 (LSVS…EEGY) and 243–302 (MGKT…PSKD).

The protein belongs to the TALE/IRO homeobox family.

The protein resides in the nucleus. Its function is as follows. May act as a morphogenetic regulator of cell adhesion. Participates in the early events that lead to differentiation. The polypeptide is Homeobox protein Mohawk (Mkx) (Mus musculus (Mouse)).